Here is a 414-residue protein sequence, read N- to C-terminus: 3-phosphoshikimate 1-carboxyvinyltransferase (414 aa).

Lysine 20, serine 21, and arginine 25 together coordinate 3-phosphoshikimate. Residue lysine 20 participates in phosphoenolpyruvate binding. Residue arginine 113 participates in phosphoenolpyruvate binding. 3-phosphoshikimate is bound by residues serine 154, serine 155, glutamine 156, serine 181, aspartate 296, and lysine 323. Glutamine 156 contributes to the phosphoenolpyruvate binding site. The Proton acceptor role is filled by aspartate 296. Phosphoenolpyruvate contacts are provided by arginine 327, arginine 371, and lysine 395.

This sequence belongs to the EPSP synthase family. As to quaternary structure, monomer.

Its subcellular location is the cytoplasm. The catalysed reaction is 3-phosphoshikimate + phosphoenolpyruvate = 5-O-(1-carboxyvinyl)-3-phosphoshikimate + phosphate. It functions in the pathway metabolic intermediate biosynthesis; chorismate biosynthesis. Catalyzes the transfer of the enolpyruvyl moiety of phosphoenolpyruvate (PEP) to the 5-hydroxyl of shikimate-3-phosphate (S3P) to produce enolpyruvyl shikimate-3-phosphate and inorganic phosphate. This Saccharolobus solfataricus (strain ATCC 35092 / DSM 1617 / JCM 11322 / P2) (Sulfolobus solfataricus) protein is 3-phosphoshikimate 1-carboxyvinyltransferase.